A 301-amino-acid chain; its full sequence is Homoserine O-acetyltransferase (301 aa).

The active-site Acyl-thioester intermediate is Cys142. 2 residues coordinate substrate: Lys163 and Ser192. His235 functions as the Proton acceptor in the catalytic mechanism. Glu237 is a catalytic residue. Arg249 lines the substrate pocket.

Belongs to the MetA family.

It is found in the cytoplasm. It catalyses the reaction L-homoserine + acetyl-CoA = O-acetyl-L-homoserine + CoA. It functions in the pathway amino-acid biosynthesis; L-methionine biosynthesis via de novo pathway; O-acetyl-L-homoserine from L-homoserine: step 1/1. Functionally, transfers an acetyl group from acetyl-CoA to L-homoserine, forming acetyl-L-homoserine. This is Homoserine O-acetyltransferase from Bacillus anthracis (strain A0248).